Consider the following 758-residue polypeptide: 5-methyltetrahydropteroyltriglutamate--homocysteine methyltransferase (758 aa).

Residues 17-20 and K117 contribute to the 5-methyltetrahydropteroyltri-L-glutamate site; that span reads RELK. L-homocysteine-binding positions include 434–436 and E487; that span reads IGS. Residues 434 to 436 and E487 contribute to the L-methionine site; that span reads IGS. 5-methyltetrahydropteroyltri-L-glutamate contacts are provided by residues 518-519 and W564; that span reads RC. L-homocysteine is bound at residue D602. D602 contacts L-methionine. Position 608 (E608) interacts with 5-methyltetrahydropteroyltri-L-glutamate. The Zn(2+) site is built by H644, C646, and E668. H697 (proton donor) is an active-site residue. Position 729 (C729) interacts with Zn(2+).

This sequence belongs to the vitamin-B12 independent methionine synthase family. Requires Zn(2+) as cofactor.

It carries out the reaction 5-methyltetrahydropteroyltri-L-glutamate + L-homocysteine = tetrahydropteroyltri-L-glutamate + L-methionine. It functions in the pathway amino-acid biosynthesis; L-methionine biosynthesis via de novo pathway; L-methionine from L-homocysteine (MetE route): step 1/1. Catalyzes the transfer of a methyl group from 5-methyltetrahydrofolate to homocysteine resulting in methionine formation. This Yersinia pestis bv. Antiqua (strain Antiqua) protein is 5-methyltetrahydropteroyltriglutamate--homocysteine methyltransferase.